We begin with the raw amino-acid sequence, 445 residues long: UPF0761 membrane protein Mlg_0521 (445 aa).

The next 6 membrane-spanning stretches (helical) occupy residues 56 to 76 (LLAL…FPVF), 112 to 132 (GLTV…MAAI), 152 to 172 (FMVY…SLGI), 195 to 215 (LLAG…YAAV), 225 to 245 (ALLG…GFGW), and 259 to 279 (ALAA…VVLV).

This sequence belongs to the UPF0761 family.

It localises to the cell inner membrane. This Alkalilimnicola ehrlichii (strain ATCC BAA-1101 / DSM 17681 / MLHE-1) protein is UPF0761 membrane protein Mlg_0521.